A 162-amino-acid chain; its full sequence is Putative 4-hydroxy-4-methyl-2-oxoglutarate aldolase (162 aa).

Substrate contacts are provided by residues Gly75–Leu78 and Arg97. Asp98 serves as a coordination point for a divalent metal cation.

The protein belongs to the class II aldolase/RraA-like family. Homotrimer. A divalent metal cation serves as cofactor.

It carries out the reaction 4-hydroxy-4-methyl-2-oxoglutarate = 2 pyruvate. It catalyses the reaction oxaloacetate + H(+) = pyruvate + CO2. In terms of biological role, catalyzes the aldol cleavage of 4-hydroxy-4-methyl-2-oxoglutarate (HMG) into 2 molecules of pyruvate. Also contains a secondary oxaloacetate (OAA) decarboxylase activity due to the common pyruvate enolate transition state formed following C-C bond cleavage in the retro-aldol and decarboxylation reactions. This Pseudomonas paraeruginosa (strain DSM 24068 / PA7) (Pseudomonas aeruginosa (strain PA7)) protein is Putative 4-hydroxy-4-methyl-2-oxoglutarate aldolase.